The following is a 473-amino-acid chain: Vasculin (473 aa).

Disordered stretches follow at residues 1–26 (MAQH…SLNF), 44–163 (RRRH…EYPP), 196–240 (SQPV…SFPH), 258–286 (NFSP…QQPR), and 305–342 (LKRD…QERD). Position 49 is a phosphoserine (S49). Position 87 is an omega-N-methylarginine (R87). Low complexity predominate over residues 93-107 (GSSRSRSSIFHSGKS). A compositionally biased stretch (basic and acidic residues) spans 119 to 133 (ETGRKDDKRERKQFE). Residues S274, S276, S322, and S381 each carry the phosphoserine modification. Residues 305–329 (LKRDRVEEEHEDESHVGSEKDDDSF) are compositionally biased toward basic and acidic residues. The interval 444–473 (GPWKNSTFKPTIENDDTETSSSDTSDDDDV) is disordered. The span at 456–473 (ENDDTETSSSDTSDDDDV) shows a compositional bias: acidic residues.

Belongs to the vasculin family. In terms of assembly, interacts with GTF2B, GTF2F2, RNA polymerase II and TBP.

Its subcellular location is the nucleus. Its function is as follows. Functions as a GC-rich promoter-specific transactivating transcription factor. The polypeptide is Vasculin (GPBP1) (Bos taurus (Bovine)).